Consider the following 331-residue polypeptide: Glycerol-3-phosphate dehydrogenase [NAD(P)+] (331 aa).

Residues S10, W11, R31, R32, and K105 each coordinate NADPH. 2 residues coordinate sn-glycerol 3-phosphate: K105 and G135. A139 is an NADPH binding site. Sn-glycerol 3-phosphate-binding residues include K190, D243, S253, R254, and N255. The active-site Proton acceptor is the K190. R254 lines the NADPH pocket. Residues V279 and E281 each coordinate NADPH.

It belongs to the NAD-dependent glycerol-3-phosphate dehydrogenase family.

Its subcellular location is the cytoplasm. It catalyses the reaction sn-glycerol 3-phosphate + NAD(+) = dihydroxyacetone phosphate + NADH + H(+). The catalysed reaction is sn-glycerol 3-phosphate + NADP(+) = dihydroxyacetone phosphate + NADPH + H(+). It participates in membrane lipid metabolism; glycerophospholipid metabolism. In terms of biological role, catalyzes the reduction of the glycolytic intermediate dihydroxyacetone phosphate (DHAP) to sn-glycerol 3-phosphate (G3P), the key precursor for phospholipid synthesis. The sequence is that of Glycerol-3-phosphate dehydrogenase [NAD(P)+] from Corynebacterium diphtheriae (strain ATCC 700971 / NCTC 13129 / Biotype gravis).